Reading from the N-terminus, the 541-residue chain is Malate synthase (541 aa).

R169 (proton acceptor) is an active-site residue. The active-site Proton donor is D454.

This sequence belongs to the malate synthase family.

The protein localises to the cytoplasm. The catalysed reaction is glyoxylate + acetyl-CoA + H2O = (S)-malate + CoA + H(+). The protein operates within carbohydrate metabolism; glyoxylate cycle; (S)-malate from isocitrate: step 2/2. In Streptomyces clavuligerus, this protein is Malate synthase (aceB).